Consider the following 409-residue polypeptide: Putative competence-damage inducible protein (409 aa).

Belongs to the CinA family.

This chain is Putative competence-damage inducible protein, found in Clostridium botulinum (strain Loch Maree / Type A3).